A 480-amino-acid chain; its full sequence is MIMRQTKLYPVVMAGGSGSRLWPLSRVLYPKQFLCLKGDLTMLQTTICRLNGVECESPLVICNEQHRFIVAEQLRQLNKLTENIILEPAGRNTAPAIALAALAATRQHTDCDPLMLVLAADHAIANEEAFRDAVRGAMPYADAGKLVTFGIVPDLPETGYGYIRRGDVVPGATDAVAFEVAQFVEKPGLETAQAYVASGDYYWNSGMFLFRAGRYLEELKKFRPDILAACEQAMRGVDPDLDFIRVDEEAFLACPEESIDYAVMERTADAVVMPMDAGWSDVGSWSSLWEISAHTPEGNVHHGDVISHKTENSYVYAESGLVTTVGVKDLVVVQTKDAVLIADRHAVQDVKKVVEKIKADGRHEHHMHREVYRPWGKYDSIDAGERYQVKRITVKPGEGLSVQMHHHRAEHWVVVAGTARVTINGEVKLLGENESIYIPLGATHCLENPGKIPLDLIEVRSGSYLEEDDVVRFEDRYGRV.

Belongs to the mannose-6-phosphate isomerase type 2 family.

It carries out the reaction alpha-D-mannose 1-phosphate + GTP + H(+) = GDP-alpha-D-mannose + diphosphate. Its pathway is nucleotide-sugar biosynthesis; GDP-alpha-D-mannose biosynthesis; GDP-alpha-D-mannose from alpha-D-mannose 1-phosphate (GTP route): step 1/1. Its function is as follows. Involved in the biosynthesis of the capsular polysaccharide colanic acid. In Salmonella typhimurium (strain LT2 / SGSC1412 / ATCC 700720), this protein is Mannose-1-phosphate guanylyltransferase ManC (manC).